The sequence spans 437 residues: Type II methylase M.HgiEI (437 aa).

The SAM-dependent MTase C5-type domain occupies 4-431 (FRFIDLFAGI…KRLQCVKLFE (428 aa)). Cysteine 75 is an active-site residue.

It belongs to the class I-like SAM-binding methyltransferase superfamily. C5-methyltransferase family.

It catalyses the reaction a 2'-deoxycytidine in DNA + S-adenosyl-L-methionine = a 5-methyl-2'-deoxycytidine in DNA + S-adenosyl-L-homocysteine + H(+). In terms of biological role, a methylase that recognizes the double-stranded sequence 5'-GGWCC-3', methylates C-? on both strands, and protects the DNA from cleavage by the HgiEI endonuclease. This system is more active than isoschizomeric RM.HgiBI. The polypeptide is Type II methylase M.HgiEI (Herpetosiphon aurantiacus (Herpetosiphon giganteus)).